The primary structure comprises 311 residues: Energy-coupling factor transporter ATP-binding protein EcfA2 (311 aa).

Residues 3–265 form the ABC transporter domain; sequence IKLKDVKFTF…IAFLEENNLQ (263 aa). ATP is bound at residue 40–47; it reads GQTGSGKT.

The protein belongs to the ABC transporter superfamily. Energy-coupling factor EcfA family. In terms of assembly, forms a stable energy-coupling factor (ECF) transporter complex composed of 2 membrane-embedded substrate-binding proteins (S component), 2 ATP-binding proteins (A component) and 2 transmembrane proteins (T component).

The protein localises to the cell membrane. ATP-binding (A) component of a common energy-coupling factor (ECF) ABC-transporter complex. Unlike classic ABC transporters this ECF transporter provides the energy necessary to transport a number of different substrates. In Mycoplasmopsis synoviae (strain 53) (Mycoplasma synoviae), this protein is Energy-coupling factor transporter ATP-binding protein EcfA2.